Here is a 285-residue protein sequence, read N- to C-terminus: 4-hydroxybenzoate octaprenyltransferase (285 aa).

Helical transmembrane passes span 28-48, 86-106, 110-130, 133-153, 165-185, 210-230, 232-252, and 262-284; these read LWAM…WIFV, IAAW…FALV, NALT…YPFF, FFAI…PMAF, WLML…YAMV, IMLC…LLGL, WPYW…YTLI, and AAFR…AYAI.

This sequence belongs to the UbiA prenyltransferase family. Mg(2+) is required as a cofactor.

It is found in the cell inner membrane. It carries out the reaction all-trans-octaprenyl diphosphate + 4-hydroxybenzoate = 4-hydroxy-3-(all-trans-octaprenyl)benzoate + diphosphate. It functions in the pathway cofactor biosynthesis; ubiquinone biosynthesis. In terms of biological role, catalyzes the prenylation of para-hydroxybenzoate (PHB) with an all-trans polyprenyl group. Mediates the second step in the final reaction sequence of ubiquinone-8 (UQ-8) biosynthesis, which is the condensation of the polyisoprenoid side chain with PHB, generating the first membrane-bound Q intermediate 3-octaprenyl-4-hydroxybenzoate. This is 4-hydroxybenzoate octaprenyltransferase from Cupriavidus necator (strain ATCC 17699 / DSM 428 / KCTC 22496 / NCIMB 10442 / H16 / Stanier 337) (Ralstonia eutropha).